Consider the following 185-residue polypeptide: Ribosome-recycling factor (185 aa).

It belongs to the RRF family.

The protein resides in the cytoplasm. Its function is as follows. Responsible for the release of ribosomes from messenger RNA at the termination of protein biosynthesis. May increase the efficiency of translation by recycling ribosomes from one round of translation to another. In Shewanella pealeana (strain ATCC 700345 / ANG-SQ1), this protein is Ribosome-recycling factor.